The following is a 226-amino-acid chain: ATP synthase F(0) complex subunit a (226 aa).

The next 6 membrane-spanning stretches (helical) occupy residues 6 to 26 (FASF…IIMF), 68 to 88 (WSLM…LGLL), 97 to 117 (QLSM…ITGF), 138 to 158 (IPML…ALAV), 164 to 184 (ITAG…LTSI), and 189 to 209 (AILT…VALI).

The protein belongs to the ATPase A chain family. As to quaternary structure, component of the ATP synthase complex composed at least of ATP5F1A/subunit alpha, ATP5F1B/subunit beta, ATP5MC1/subunit c (homooctomer), MT-ATP6/subunit a, MT-ATP8/subunit 8, ATP5ME/subunit e, ATP5MF/subunit f, ATP5MG/subunit g, ATP5MK/subunit k, ATP5MJ/subunit j, ATP5F1C/subunit gamma, ATP5F1D/subunit delta, ATP5F1E/subunit epsilon, ATP5PF/subunit F6, ATP5PB/subunit b, ATP5PD/subunit d, ATP5PO/subunit OSCP. ATP synthase complex consists of a soluble F(1) head domain (subunits alpha(3) and beta(3)) - the catalytic core - and a membrane F(0) domain - the membrane proton channel (subunits c, a, 8, e, f, g, k and j). These two domains are linked by a central stalk (subunits gamma, delta, and epsilon) rotating inside the F1 region and a stationary peripheral stalk (subunits F6, b, d, and OSCP). Interacts with DNAJC30; interaction is direct.

The protein localises to the mitochondrion inner membrane. It carries out the reaction H(+)(in) = H(+)(out). Functionally, subunit a, of the mitochondrial membrane ATP synthase complex (F(1)F(0) ATP synthase or Complex V) that produces ATP from ADP in the presence of a proton gradient across the membrane which is generated by electron transport complexes of the respiratory chain. ATP synthase complex consist of a soluble F(1) head domain - the catalytic core - and a membrane F(1) domain - the membrane proton channel. These two domains are linked by a central stalk rotating inside the F(1) region and a stationary peripheral stalk. During catalysis, ATP synthesis in the catalytic domain of F(1) is coupled via a rotary mechanism of the central stalk subunits to proton translocation. With the subunit c (ATP5MC1), forms the proton-conducting channel in the F(0) domain, that contains two crucial half-channels (inlet and outlet) that facilitate proton movement from the mitochondrial intermembrane space (IMS) into the matrix. Protons are taken up via the inlet half-channel and released through the outlet half-channel, following a Grotthuss mechanism. This chain is ATP synthase F(0) complex subunit a, found in Ictidomys tridecemlineatus (Thirteen-lined ground squirrel).